A 383-amino-acid chain; its full sequence is Vesicle-associated membrane protein-associated protein scs2 (383 aa).

The 123-residue stretch at 1–123 (MSVECSGELF…SIFDRKIRCV (123 aa)) folds into the MSP domain. The Cytoplasmic segment spans residues 1-362 (MSVECSGELF…TGASLTESPG (362 aa)). Positions 127 to 146 (KQPPQSADKQVENTSTSNPP) are enriched in polar residues. 2 disordered regions span residues 127-160 (KQPP…SSVG) and 233-359 (ESAS…SLTE). 5 positions are modified to phosphoserine: S236, S237, S259, S261, and S268. The segment covering 241–263 (DVARSKVQDIIDNEIPKPSESPR) has biased composition (basic and acidic residues). A compositionally biased stretch (basic and acidic residues) spans 289–300 (FDTKKNDFDSKL). Polar residues predominate over residues 347–359 (ADPSSSTGASLTE). A helical; Anchor for type IV membrane protein transmembrane segment spans residues 363–383 (IPPNIVIILCLIFFLIGYLFF).

The protein belongs to the VAMP-associated protein (VAP) (TC 9.B.17) family. In terms of assembly, interacts (via MSP domain) with duc1 (via FFAT-motif); the interaction is direct and serves to restrict the localization of duc1 to areas of cell membrane-endoplasmic reticulum contact sites, and away from the cell division site. Interacts with epr1.

It is found in the endoplasmic reticulum membrane. Functionally, vesicle-associated membrane protein-associated protein (VAP) implicated in maintaining the cortical endoplasmic reticulum (ER)-plasma membrane (PM) attachment. ER-PM contacts function to modulate the distribution of contractile ring components to ensure robust ring assembly. ER-PM contacts function also in controlling exocytosis and maintenance of cell polarity regulating cell shape. VAPs play an important role in regulating eisosome assembly. VAPs also contribute to ER-phagy by tethering atg8 to the ER membrane, but also by maintaining the ER-plasma membrane contact. Restricts the localization of duc1 away from the site of cell division. This chain is Vesicle-associated membrane protein-associated protein scs2 (scs2), found in Schizosaccharomyces pombe (strain 972 / ATCC 24843) (Fission yeast).